A 423-amino-acid polypeptide reads, in one-letter code: Imidazolonepropionase (423 aa).

The Fe(3+) site is built by His-78 and His-80. Zn(2+)-binding residues include His-78 and His-80. The 4-imidazolone-5-propanoate site is built by Arg-87, Tyr-150, and His-183. Tyr-150 provides a ligand contact to N-formimidoyl-L-glutamate. Residue His-247 coordinates Fe(3+). His-247 serves as a coordination point for Zn(2+). Glu-250 is a binding site for 4-imidazolone-5-propanoate. Position 322 (Asp-322) interacts with Fe(3+). Asp-322 is a binding site for Zn(2+). 2 residues coordinate N-formimidoyl-L-glutamate: Asn-324 and Gly-326. Ser-327 provides a ligand contact to 4-imidazolone-5-propanoate.

The protein belongs to the metallo-dependent hydrolases superfamily. HutI family. Zn(2+) serves as cofactor. Requires Fe(3+) as cofactor.

It is found in the cytoplasm. The catalysed reaction is 4-imidazolone-5-propanoate + H2O = N-formimidoyl-L-glutamate. It functions in the pathway amino-acid degradation; L-histidine degradation into L-glutamate; N-formimidoyl-L-glutamate from L-histidine: step 3/3. Functionally, catalyzes the hydrolytic cleavage of the carbon-nitrogen bond in imidazolone-5-propanoate to yield N-formimidoyl-L-glutamate. It is the third step in the universal histidine degradation pathway. The polypeptide is Imidazolonepropionase (Bacillus cereus (strain ATCC 14579 / DSM 31 / CCUG 7414 / JCM 2152 / NBRC 15305 / NCIMB 9373 / NCTC 2599 / NRRL B-3711)).